We begin with the raw amino-acid sequence, 372 residues long: Mannan endo-1,4-beta-mannosidase 8 (372 aa).

Substrate-binding residues include W57 and N172. E173 serves as the catalytic Proton donor. Position 253 (Y253) interacts with substrate. E293 functions as the Nucleophile in the catalytic mechanism. W335 lines the substrate pocket.

This sequence belongs to the glycosyl hydrolase 5 (cellulase A) family. In terms of tissue distribution, expressed in stems and leaves and seeds.

It carries out the reaction Random hydrolysis of (1-&gt;4)-beta-D-mannosidic linkages in mannans, galactomannans and glucomannans.. The sequence is that of Mannan endo-1,4-beta-mannosidase 8 (MAN8) from Oryza sativa subsp. japonica (Rice).